We begin with the raw amino-acid sequence, 410 residues long: Tryptophan synthase beta chain (410 aa).

An N6-(pyridoxal phosphate)lysine modification is found at K104.

This sequence belongs to the TrpB family. Tetramer of two alpha and two beta chains. The cofactor is pyridoxal 5'-phosphate.

The enzyme catalyses (1S,2R)-1-C-(indol-3-yl)glycerol 3-phosphate + L-serine = D-glyceraldehyde 3-phosphate + L-tryptophan + H2O. It functions in the pathway amino-acid biosynthesis; L-tryptophan biosynthesis; L-tryptophan from chorismate: step 5/5. The beta subunit is responsible for the synthesis of L-tryptophan from indole and L-serine. The sequence is that of Tryptophan synthase beta chain from Thermosynechococcus vestitus (strain NIES-2133 / IAM M-273 / BP-1).